Consider the following 946-residue polypeptide: Inter-alpha-trypsin inhibitor heavy chain H2 (946 aa).

Positions 1–18 (MQRLACVLIWLFLLEEQA) are cleaved as a signal peptide. Positions 19 to 54 (FEIPANEYSEFAGYSNLVELAPDKFPFVQENRRYQR) are excised as a propeptide. Residues 56-185 (LPEESGEMTD…KVQFELHYQE (130 aa)) form the VIT domain. Ser-60 carries the phosphoserine modification. Asn-118 and Asn-263 each carry an N-linked (GlcNAc...) asparagine glycan. A 4-carboxyglutamate mark is found at Glu-282 and Glu-283. Positions 308–468 (PKNILFVIDV…YDFLKRLSNE (161 aa)) constitute a VWFA domain. Asn-445 carries N-linked (GlcNAc...) asparagine glycosylation. The residue at position 466 (Ser-466) is a Phosphoserine. A glycan (N-linked (GlcNAc...) asparagine) is linked at Asn-578. Position 702 is an aspartate 1-(chondroitin 4-sulfate)-ester (Asp-702). The propeptide occupies 703–946 (PHFIIYLPKS…PQLYSFLKRP (244 aa)). Ser-886 carries the post-translational modification Phosphoserine.

This sequence belongs to the ITIH family. As to quaternary structure, I-alpha-I plasma protease inhibitors are assembled from one or two heavy chains (HC) and one light chain, bikunin. Inter-alpha-inhibitor (I-alpha-I) is composed of ITIH1/HC1, ITIH2/HC2 and bikunin. In terms of processing, heavy chains are linked to bikunin via chondroitin 4-sulfate esterified to the alpha-carboxyl of the C-terminal aspartate after propeptide cleavage. Post-translationally, phosphorylated by FAM20C in the extracellular medium.

It localises to the secreted. Functionally, may act as a carrier of hyaluronan in serum or as a binding protein between hyaluronan and other matrix protein, including those on cell surfaces in tissues to regulate the localization, synthesis and degradation of hyaluronan which are essential to cells undergoing biological processes. This Mesocricetus auratus (Golden hamster) protein is Inter-alpha-trypsin inhibitor heavy chain H2 (ITIH2).